Reading from the N-terminus, the 209-residue chain is Small ribosomal subunit protein uS4 (209 aa).

The 61-residue stretch at 99–159 (SRLDSVCYRM…EKSKAQLRIK (61 aa)) folds into the S4 RNA-binding domain.

The protein belongs to the universal ribosomal protein uS4 family. As to quaternary structure, part of the 30S ribosomal subunit. Contacts protein S5. The interaction surface between S4 and S5 is involved in control of translational fidelity.

Functionally, one of the primary rRNA binding proteins, it binds directly to 16S rRNA where it nucleates assembly of the body of the 30S subunit. Its function is as follows. With S5 and S12 plays an important role in translational accuracy. The chain is Small ribosomal subunit protein uS4 from Thiobacillus denitrificans (strain ATCC 25259 / T1).